The chain runs to 586 residues: Acyl-coenzyme A synthetase ACSM3, mitochondrial (586 aa).

The N-terminal 27 residues, 1–27 (MLARVTRKMLRHAKCFQRLAIFGSVRA), are a transit peptide targeting the mitochondrion. An N6-succinyllysine mark is found at Lys73 and Lys106. Position 157 is an N6-acetyllysine (Lys157). ATP contacts are provided by residues 235–243 (TSGTSGYPK), 374–379 (EGYGQT), Asp461, Arg476, and Lys572.

It belongs to the ATP-dependent AMP-binding enzyme family. Mg(2+) serves as cofactor. The cofactor is Mn(2+).

It is found in the mitochondrion. It localises to the mitochondrion matrix. The catalysed reaction is a medium-chain fatty acid + ATP + CoA = a medium-chain fatty acyl-CoA + AMP + diphosphate. It carries out the reaction propanoate + ATP + CoA = propanoyl-CoA + AMP + diphosphate. The enzyme catalyses butanoate + ATP + CoA = butanoyl-CoA + AMP + diphosphate. It catalyses the reaction 2-methylpropanoate + ATP + CoA = 2-methylpropanoyl-CoA + AMP + diphosphate. The catalysed reaction is 2-methylbutanoate + ATP + CoA = 2-methylbutanoyl-CoA + AMP + diphosphate. It carries out the reaction octanoate + ATP + CoA = octanoyl-CoA + AMP + diphosphate. In terms of biological role, catalyzes the activation of fatty acids by CoA to produce an acyl-CoA, the first step in fatty acid metabolism. Capable of activating medium-chain fatty acids with a preference for isobutyrate among fatty acids with 2-6 carbon atoms. The polypeptide is Acyl-coenzyme A synthetase ACSM3, mitochondrial (ACSM3) (Homo sapiens (Human)).